The sequence spans 151 residues: uncharacterized protein (151 aa).

This is an uncharacterized protein from Aquifex aeolicus (strain VF5).